The chain runs to 124 residues: uncharacterized protein (124 aa).

Not required for the biogenesis of c-type cytochromes. This is an uncharacterized protein from Rhodobacter capsulatus (strain ATCC BAA-309 / NBRC 16581 / SB1003).